Here is a 440-residue protein sequence, read N- to C-terminus: Beta-1,3-galactosyl-O-glycosyl-glycoprotein beta-1,6-N-acetylglucosaminyltransferase (440 aa).

The Cytoplasmic portion of the chain corresponds to 1–9 (MKMAGWKKK). The helical; Signal-anchor for type II membrane protein transmembrane segment at 10–30 (LCPGHHLWALGCYMLLAVVSL) threads the bilayer. Topologically, residues 31–440 (RLSLRFKCDV…RHKAIYGTEL (410 aa)) are lumenal. Asn72 and Asn108 each carry an N-linked (GlcNAc...) asparagine; by host glycan. Cystine bridges form between Cys73–Cys230, Cys164–Cys384, Cys185–Cys212, and Cys393–Cys425.

Belongs to the glycosyltransferase 14 family.

It is found in the host Golgi apparatus membrane. It carries out the reaction a 3-O-[beta-D-galactosyl-(1-&gt;3)-N-acetyl-alpha-D-galactosaminyl]-L-seryl-[protein] + UDP-N-acetyl-alpha-D-glucosamine = 3-O-{beta-D-galactosyl-(1-&gt;3)-[N-acetyl-beta-D-glucosaminyl-(1-&gt;6)]-N-acetyl-alpha-D-galactosaminyl}-L-seryl-[protein] + UDP + H(+). The enzyme catalyses a 3-O-[beta-D-galactosyl-(1-&gt;3)-N-acetyl-alpha-D-galactosaminyl]-L-threonyl-[protein] + UDP-N-acetyl-alpha-D-glucosamine = a 3-O-{beta-D-galactosyl-(1-&gt;3)-[N-acetyl-beta-D-glucosaminyl-(1-&gt;6)]-N-acetyl-alpha-D-galactosaminyl}-L-threonyl-[protein] + UDP + H(+). The catalysed reaction is a beta-D-Gal-(1-&gt;4)-beta-D-GlcNAc-(1-&gt;3)-beta-D-Gal-(1-&gt;4)-beta-D-GlcNAc derivative + UDP-N-acetyl-alpha-D-glucosamine = a beta-D-Gal-(1-&gt;4)-beta-D-GlcNAc-(1-&gt;3)-[beta-D-GlcNAc-(1-&gt;6)]-beta-D-Gal-(1-&gt;4)-N-acetyl-beta-D-glucosaminyl derivative + UDP + H(+). It catalyses the reaction 3-O-[N-acetyl-beta-D-glucosaminyl-(1-&gt;3)-N-acetyl-alpha-D-galactosaminyl]-L-seryl-[protein] + UDP-N-acetyl-alpha-D-glucosamine = 3-O-[N-acetyl-beta-D-glucosaminyl-(1-&gt;3)-[N-acetyl-beta-D-glucosaminyl-(1-&gt;6)]-N-acetyl-alpha-D-galactosaminyl]-L-seryl-[protein] + UDP + H(+). It carries out the reaction a 3-O-[N-acetyl-beta-D-glucosaminyl-(1-&gt;3)-N-acetyl-alpha-D-galactosaminyl]-L-threonyl-[protein] + UDP-N-acetyl-alpha-D-glucosamine = 3-O-[N-acetyl-beta-D-glucosaminyl-(1-&gt;3)-[N-acetyl-beta-D-glucosaminyl-(1-&gt;6)]-N-acetyl-alpha-D-galactosaminyl]-L-threonyl-[protein] + UDP + H(+). It functions in the pathway protein modification; protein glycosylation. Functionally, non-essential glycosyltransferase that can synthesize all known mucin beta 6 N-acetylglucosaminides. Mediates core 2 and core 4 O-glycan branching, 2 important steps in mucin-type biosynthesis. Has also I-branching enzyme activity by converting linear into branched poly-N-acetyllactosaminoglycans. Contributes to the post-translational modifications of structural proteins. This is Beta-1,3-galactosyl-O-glycosyl-glycoprotein beta-1,6-N-acetylglucosaminyltransferase (Bo17) from Bovine herpesvirus 4 (strain LVR140) (BoHV-4).